The primary structure comprises 1766 residues: DNA-directed RNA polymerase II subunit RPB1-A (1766 aa).

Zn(2+) is bound by residues C69, C72, C79, and H82. Positions 487, 489, and 491 each coordinate Mg(2+). A bridging helix region spans residues 813-825; the sequence is PHEFFFHTMAGRE. The tract at residues 1660–1766 is disordered; it reads HAMSSAAPPS…EFGDEEEEEQ (107 aa). The segment covering 1706–1716 has biased composition (basic and acidic residues); it reads RGDEPSTHRSD. Positions 1742–1756 are enriched in low complexity; sequence PTAKTPQQAAPPTAA.

This sequence belongs to the RNA polymerase beta' chain family. As to quaternary structure, component of the RNA polymerase II (Pol II) complex consisting of 12 subunits.

The protein resides in the nucleus. The catalysed reaction is RNA(n) + a ribonucleoside 5'-triphosphate = RNA(n+1) + diphosphate. DNA-dependent RNA polymerase catalyzes the transcription of DNA into RNA using the four ribonucleoside triphosphates as substrates. Largest and catalytic component of RNA polymerase II which synthesizes mRNA precursors and many functional non-coding RNAs. Forms the polymerase active center together with the second largest subunit. Pol II is the central component of the basal RNA polymerase II transcription machinery. It is composed of mobile elements that move relative to each other. RPB1 is part of the core element with the central large cleft, the clamp element that moves to open and close the cleft and the jaws that are thought to grab the incoming DNA template. At the start of transcription, a single-stranded DNA template strand of the promoter is positioned within the central active site cleft of Pol II. A bridging helix emanates from RPB1 and crosses the cleft near the catalytic site and is thought to promote translocation of Pol II by acting as a ratchet that moves the RNA-DNA hybrid through the active site by switching from straight to bent conformations at each step of nucleotide addition. During transcription elongation, Pol II moves on the template as the transcript elongates. The polypeptide is DNA-directed RNA polymerase II subunit RPB1-A (TRP4.8) (Trypanosoma brucei brucei).